Reading from the N-terminus, the 431-residue chain is Na(+)-translocating NADH-quinone reductase subunit F (431 aa).

The helical transmembrane segment at Phe9–Leu29 threads the bilayer. Positions His39–Tyr133 constitute a 2Fe-2S ferredoxin-type domain. Cys76, Cys82, Cys85, and Cys117 together coordinate [2Fe-2S] cluster. Positions Ala136–Lys286 constitute an FAD-binding FR-type domain. The interval Asp289–Leu413 is catalytic.

Belongs to the NqrF family. In terms of assembly, composed of six subunits; NqrA, NqrB, NqrC, NqrD, NqrE and NqrF. It depends on [2Fe-2S] cluster as a cofactor. FAD serves as cofactor.

It is found in the cell inner membrane. It carries out the reaction a ubiquinone + n Na(+)(in) + NADH + H(+) = a ubiquinol + n Na(+)(out) + NAD(+). Its function is as follows. NQR complex catalyzes the reduction of ubiquinone-1 to ubiquinol by two successive reactions, coupled with the transport of Na(+) ions from the cytoplasm to the periplasm. The first step is catalyzed by NqrF, which accepts electrons from NADH and reduces ubiquinone-1 to ubisemiquinone by a one-electron transfer pathway. This is Na(+)-translocating NADH-quinone reductase subunit F from Chlamydia pneumoniae (Chlamydophila pneumoniae).